Consider the following 114-residue polypeptide: Ribosome-binding factor A (114 aa).

This sequence belongs to the RbfA family. As to quaternary structure, monomer. Binds 30S ribosomal subunits, but not 50S ribosomal subunits or 70S ribosomes.

It is found in the cytoplasm. Functionally, one of several proteins that assist in the late maturation steps of the functional core of the 30S ribosomal subunit. Associates with free 30S ribosomal subunits (but not with 30S subunits that are part of 70S ribosomes or polysomes). Required for efficient processing of 16S rRNA. May interact with the 5'-terminal helix region of 16S rRNA. This is Ribosome-binding factor A from Listeria monocytogenes serotype 4b (strain F2365).